Here is a 445-residue protein sequence, read N- to C-terminus: Phosphoglucosamine mutase (445 aa).

Residue S101 is the Phosphoserine intermediate of the active site. 4 residues coordinate Mg(2+): S101, D240, D242, and D244. The residue at position 101 (S101) is a Phosphoserine.

It belongs to the phosphohexose mutase family. Mg(2+) serves as cofactor. In terms of processing, activated by phosphorylation.

The enzyme catalyses alpha-D-glucosamine 1-phosphate = D-glucosamine 6-phosphate. In terms of biological role, catalyzes the conversion of glucosamine-6-phosphate to glucosamine-1-phosphate. In Pseudomonas fluorescens (strain SBW25), this protein is Phosphoglucosamine mutase.